The primary structure comprises 356 residues: D-alanine--D-alanine ligase (356 aa).

The ATP-grasp domain occupies 134-339 (KQLFEHRGLP…YPELITKLIE (206 aa)). An ATP-binding site is contributed by 167-222 (NDKLNYPVFVKPANLGSSVGISKCNNEAELKEGIKEAFQFDRKLVIEQGVNAREIE). Positions 293, 306, and 308 each coordinate Mg(2+).

Belongs to the D-alanine--D-alanine ligase family. It depends on Mg(2+) as a cofactor. Requires Mn(2+) as cofactor.

The protein localises to the cytoplasm. The enzyme catalyses 2 D-alanine + ATP = D-alanyl-D-alanine + ADP + phosphate + H(+). The protein operates within cell wall biogenesis; peptidoglycan biosynthesis. Its function is as follows. Cell wall formation. The sequence is that of D-alanine--D-alanine ligase from Staphylococcus aureus (strain MSSA476).